Consider the following 350-residue polypeptide: Kelch domain-containing protein 9 (350 aa).

Kelch repeat units follow at residues 39 to 89 (RFYL…LVGG), 91 to 137 (WLCV…SHTC), and 325 to 350 (QLYL…EFFI).

As to quaternary structure, interacts with CCNA1.

In Mus musculus (Mouse), this protein is Kelch domain-containing protein 9 (Klhdc9).